A 325-amino-acid chain; its full sequence is ATPase GET3 (325 aa).

Residue 34 to 41 (KGGVGKTT) participates in ATP binding. The active site involves aspartate 63. 2 residues coordinate ATP: glutamate 243 and asparagine 270. Zn(2+) is bound by residues cysteine 281 and cysteine 284.

This sequence belongs to the arsA ATPase family. In terms of assembly, homodimer.

It localises to the cytoplasm. Its subcellular location is the endoplasmic reticulum. Its function is as follows. ATPase required for the post-translational delivery of tail-anchored (TA) proteins to the endoplasmic reticulum. Recognizes and selectively binds the transmembrane domain of TA proteins in the cytosol. This complex then targets to the endoplasmic reticulum by membrane-bound receptors, where the tail-anchored protein is released for insertion. This process is regulated by ATP binding and hydrolysis. ATP binding drives the homodimer towards the closed dimer state, facilitating recognition of newly synthesized TA membrane proteins. ATP hydrolysis is required for insertion. Subsequently, the homodimer reverts towards the open dimer state, lowering its affinity for the membrane-bound receptor, and returning it to the cytosol to initiate a new round of targeting. The protein is ATPase GET3 of Coccidioides posadasii (strain C735) (Valley fever fungus).